Here is a 1173-residue protein sequence, read N- to C-terminus: Eukaryotic translation initiation factor 3 subunit A (1173 aa).

A PCI domain is found at 319–502 (LQRMAAHVLL…NSIYFGTDLT (184 aa)). Disordered stretches follow at residues 589 to 613 (QNNA…LAEQ) and 836 to 1173 (AAEA…PVQL). Composition is skewed to basic and acidic residues over residues 836–900 (AAEA…RGGD), 925–1011 (DRNE…EPDS), 1028–1081 (SRDD…DAAP), and 1090–1125 (DAPR…RAPK). The span at 1128–1142 (GPSGGTGTAAGGGGN) shows a compositional bias: gly residues. The segment covering 1149-1165 (PRDEPAPKRDQPQDKGK) has biased composition (basic and acidic residues).

This sequence belongs to the eIF-3 subunit A family. In terms of assembly, component of the eukaryotic translation initiation factor 3 (eIF-3) complex. The eIF-3 complex interacts with pix.

It is found in the cytoplasm. Functionally, RNA-binding component of the eukaryotic translation initiation factor 3 (eIF-3) complex, which is involved in protein synthesis of a specialized repertoire of mRNAs and, together with other initiation factors, stimulates binding of mRNA and methionyl-tRNAi to the 40S ribosome. The eIF-3 complex specifically targets and initiates translation of a subset of mRNAs involved in cell proliferation. The protein is Eukaryotic translation initiation factor 3 subunit A of Drosophila persimilis (Fruit fly).